The sequence spans 95 residues: Co-chaperonin GroES (95 aa).

The protein belongs to the GroES chaperonin family. Heptamer of 7 subunits arranged in a ring. Interacts with the chaperonin GroEL.

Its subcellular location is the cytoplasm. Its function is as follows. Together with the chaperonin GroEL, plays an essential role in assisting protein folding. The GroEL-GroES system forms a nano-cage that allows encapsulation of the non-native substrate proteins and provides a physical environment optimized to promote and accelerate protein folding. GroES binds to the apical surface of the GroEL ring, thereby capping the opening of the GroEL channel. The chain is Co-chaperonin GroES from Rhodobacter capsulatus (Rhodopseudomonas capsulata).